The following is a 613-amino-acid chain: Zinc metalloproteinase-disintegrin-like MTP4 (613 aa).

Positions 1–20 (MIEVLLVTICFTVFPYQGSS) are cleaved as a signal peptide. Positions 21–191 (IILESGNVND…DEPIEKISQL (171 aa)) are excised as a propeptide. The 197-residue stretch at 205-401 (KYIELYVVVD…VRPQCILNKP (197 aa)) folds into the Peptidase M12B domain. Residue E208 participates in Ca(2+) binding. An N-linked (GlcNAc...) asparagine glycan is attached at N282. D292 lines the Ca(2+) pocket. 3 disulfides stabilise this stretch: C316/C396, C356/C380, and C358/C363. Zn(2+) contacts are provided by H341, H345, and H351. C396, N399, N414, F416, E418, E421, and D424 together coordinate Ca(2+). The region spanning 409–495 (PPVCGNYFVE…KCPTDSFQRN (87 aa)) is the Disintegrin domain. Disulfide bonds link C412–C441, C423–C436, C425–C431, C435–C458, C449–C455, C454–C480, C467–C487, C474–C506, C499–C511, C518–C568, C533–C575, C543–C577, C546–C556, C563–C601, and C595–C606. N-linked (GlcNAc...) asparagine glycosylation is present at N437. The short motif at 473 to 475 (DCD) is the D/ECD-tripeptide element. Ca(2+) is bound by residues D475, L476, E478, and D490. The interval 561 to 574 (KMCGKLLCEKGNAT) is hypervariable region that may play important roles toward cell migration. N572 is a glycosylation site (N-linked (GlcNAc...) asparagine).

The protein belongs to the venom metalloproteinase (M12B) family. P-III subfamily. In terms of assembly, monomer. Requires Zn(2+) as cofactor. Expressed by the venom gland.

It is found in the secreted. In terms of biological role, snake venom zinc metalloproteinase that may impair hemostasis in the prey. The sequence is that of Zinc metalloproteinase-disintegrin-like MTP4 from Drysdalia coronoides (White-lipped snake).